The primary structure comprises 370 residues: Probable trehalose-phosphate phosphatase J (370 aa).

Belongs to the trehalose phosphatase family. A divalent metal cation is required as a cofactor.

It catalyses the reaction alpha,alpha-trehalose 6-phosphate + H2O = alpha,alpha-trehalose + phosphate. It functions in the pathway glycan biosynthesis; trehalose biosynthesis. Its function is as follows. Removes the phosphate from trehalose 6-phosphate to produce free trehalose. Trehalose accumulation in plant may improve abiotic stress tolerance. In Arabidopsis thaliana (Mouse-ear cress), this protein is Probable trehalose-phosphate phosphatase J (TPPJ).